The chain runs to 224 residues: ATP synthase subunit a (224 aa).

The next 6 helical transmembrane spans lie at 17–37 (LSLNWLSTFLGLLMIPSIYWL), 72–92 (IFISLFSLILFNNFMGLFPYI), 99–119 (LTLTLSLALPLWLCFMLYGWI), 125–145 (MFAHLVPQGTPAILMPFMVCI), 170–190 (LLLTLLGNTGPSMSYLLVTFL), and 195–215 (IALLVLESAVAMIQSYVFAVL).

It belongs to the ATPase A chain family. As to quaternary structure, F-type ATPases have 2 components, CF(1) - the catalytic core - and CF(0) - the membrane proton channel. CF(1) has five subunits: alpha(3), beta(3), gamma(1), delta(1), epsilon(1). CF(0) has three main subunits: a, b and c.

Its subcellular location is the mitochondrion inner membrane. Functionally, mitochondrial membrane ATP synthase (F(1)F(0) ATP synthase or Complex V) produces ATP from ADP in the presence of a proton gradient across the membrane which is generated by electron transport complexes of the respiratory chain. F-type ATPases consist of two structural domains, F(1) - containing the extramembraneous catalytic core and F(0) - containing the membrane proton channel, linked together by a central stalk and a peripheral stalk. During catalysis, ATP synthesis in the catalytic domain of F(1) is coupled via a rotary mechanism of the central stalk subunits to proton translocation. Key component of the proton channel; it may play a direct role in the translocation of protons across the membrane. This Drosophila simulans (Fruit fly) protein is ATP synthase subunit a (mt:ATPase6).